The primary structure comprises 570 residues: Interleukin-1 receptor accessory protein (570 aa).

Residues 1 to 20 (MGLLWYLMSLSFYGILQSHA) form the signal peptide. Ig-like C2-type domains are found at residues 21 to 128 (SERC…VAFP), 139 to 230 (NSAM…RTVT), and 243 to 348 (PQIY…AKVK). Over 21–367 (SERCDDWGLD…VELACGFGAT (347 aa)) the chain is Extracellular. Cystine bridges form between cysteine 24–cysteine 122, cysteine 47–cysteine 114, cysteine 137–cysteine 181, cysteine 160–cysteine 212, and cysteine 266–cysteine 332. Asparagine 57 carries N-linked (GlcNAc...) asparagine glycosylation. The segment at 69 to 85 (IWYWTRQDRDLEEPINF) is essential for interaction with PTPRD. 3 N-linked (GlcNAc...) asparagine glycosylation sites follow: asparagine 107, asparagine 111, and asparagine 118. N-linked (GlcNAc...) asparagine glycosylation is found at asparagine 196, asparagine 209, and asparagine 299. A helical transmembrane segment spans residues 368–388 (VFLVVVLIVVYHVYWLEMVLF). Residues 389-570 (YRAHFGTDET…GLSYSSLKNV (182 aa)) lie on the Cytoplasmic side of the membrane. A TIR domain is found at 403–546 (KEYDIYVSYA…RFWKQLQVAM (144 aa)). Glutamate 482 is an active-site residue. Positions 550–570 (KSPRWSSNDKQGLSYSSLKNV) are disordered. Residues 553–570 (RWSSNDKQGLSYSSLKNV) are compositionally biased toward polar residues.

Belongs to the interleukin-1 receptor family. In terms of assembly, the interleukin-36 receptor complex is a heterodimer of IL1RL2 and IL1RAP; the association is inhibited by IL36RN. The interleukin-1 receptor complex is a heterodimer of IL1R1 and IL1RAP. Associates with IL1R2 to form a non-signaling interleukin-1 receptor complex. Interacts with IL-33-bound IL1RL1 to form the minimal interleukin-33 signaling complex with a 1:1:1 stoichiometry. Interacts with KIT (independently of stimulation with KITLG/SCF). A mast cell-specific KITLG/SCF-induced interleukin-33 signaling complex contains IL1RL1, IL1RAP, KIT and MYD88. Interacts (via the first immunoglobilin domain) with PTPRD (via the third immunoglobilin domain); induces pre- and postsynaptic differentiation of neurons. In terms of tissue distribution, detected in lung, brain, spleen, thymus and liver. Expressed in brain endothelial cells, astrocytes, microglia and neurons. Isoform 3 is predominantly expressed in brain; expressed in hippocampal neurons.

The protein localises to the cell membrane. It localises to the secreted. It carries out the reaction NAD(+) + H2O = ADP-D-ribose + nicotinamide + H(+). In terms of biological role, coreceptor for IL1RL2 in the IL-36 signaling system. Coreceptor with IL1R1 in the IL-1 signaling system. Associates with IL1R1 bound to IL1B to form the high affinity interleukin-1 receptor complex which mediates interleukin-1-dependent activation of NF-kappa-B and other pathways. Signaling involves the recruitment of adapter molecules such as TOLLIP, MYD88, and IRAK1 or IRAK2 via the respective TIR domains of the receptor/coreceptor subunits. Recruits TOLLIP to the signaling complex. Does not bind to interleukin-1 alone; binding of IL1RN to IL1R1, prevents its association with IL1R1 to form a signaling complex. The cellular response is modulated through a non-signaling association with the membrane IL1R2 decoy receptor. Secreted forms (isoforms 2 and 3) associate with secreted ligand-bound IL1R2 and increase the affinity of secreted IL1R2 for IL1B; this complex formation may be the dominant mechanism for neutralization of IL1B by secreted/soluble receptors. Coreceptor for IL1RL1 in the IL-33 signaling system. Can bidirectionally induce pre- and postsynaptic differentiation of neurons by trans-synaptically binding to PTPRD. May play a role in IL1B-mediated costimulation of IFNG production from T-helper 1 (Th1) cells. Functionally, associates with secreted ligand-bound IL1R2 and increases the affinity of secreted IL1R2 for IL1B; this complex formation may be the dominant mechanism for neutralization of IL1B by secreted/soluble receptors. Enhances the ability of secreted IL1R1 to inhibit IL-33 signaling. Its function is as follows. Required for Src phosphorylation by IL1B. Required for IL1B-potentiated NMDA-induced calcium influx in neurons acting in cooperation with IL1R1 isoform 2 to mediate Akt kinase activation. This Mus musculus (Mouse) protein is Interleukin-1 receptor accessory protein (Il1rap).